The primary structure comprises 300 residues: Lysophosphatidic acid:oleoyl-CoA acyltransferase 1 (300 aa).

A helical membrane pass occupies residues 33–53 (LLGILGVKTIIMLPLIMLYLL). An HXXXXD motif motif is present at residues 101–106 (CTSPLD).

It belongs to the 1-acyl-sn-glycerol-3-phosphate acyltransferase family.

It is found in the lipid droplet. It localises to the endoplasmic reticulum membrane. The enzyme catalyses a 1-acyl-sn-glycero-3-phosphate + an acyl-CoA = a 1,2-diacyl-sn-glycero-3-phosphate + CoA. It catalyses the reaction 1-hexadecanoyl-sn-glycero-3-phosphate + (9Z)-octadecenoyl-CoA = 1-hexadecanoyl-2-(9Z-octadecenoyl)-sn-glycero-3-phosphate + CoA. Its function is as follows. Acyl-CoA-dependent lysophosphatidic acid acyltransferase with preference for oleoyl-CoA. Involved in triacylglyceride homeostasis and lipid droplet formation. Involved in vacuolar protein sorting. The sequence is that of Lysophosphatidic acid:oleoyl-CoA acyltransferase 1 from Saccharomyces cerevisiae (strain ATCC 204508 / S288c) (Baker's yeast).